The sequence spans 395 residues: MAKAKFERTKPHVNIGTIGHVDHGKTSLTAAITTVLAKTGGAKATAYDQIDAAPEEKERGITISTAHVEYETKNRHYAHVDCPGHADYIKNMITGAAQMDGAILVVSAADGPMLQTREHILLAKQVGVPAMVVFLNKVDVVDDPALLELVEMEVRDLLLQYGFPAYEVPIIKGSALQALAGKPEGEKAINELMDAVDNYIPHPVRATDKPFLMPIEDVFSISGRGTVVTGRVESGIIKVGEEVEIVGLKETQKTTCTGVEMFRKLLDEGQAGDNVGILLRGTKREEVERGQVLAKPGSIKPHDQFEAEVYVLSKEEGGRHTPFTNDYRPQFYFRTTDVTGTIKLPADKQMVMPGDNATTFTVELIKPIAMQQGSKFSIREGGKTVGAGVVTKINN.

The region spanning 10–204 is the tr-type G domain; that stretch reads KPHVNIGTIG…AVDNYIPHPV (195 aa). The interval 19-26 is G1; that stretch reads GHVDHGKT. 19-26 contributes to the GTP binding site; it reads GHVDHGKT. Mg(2+) is bound at residue threonine 26. Residues 60 to 64 are G2; sequence GITIS. Positions 81 to 84 are G3; that stretch reads DCPG. Residues 81–85 and 136–139 contribute to the GTP site; these read DCPGH and NKVD. The tract at residues 136–139 is G4; the sequence is NKVD. The interval 174–176 is G5; it reads SAL.

It belongs to the TRAFAC class translation factor GTPase superfamily. Classic translation factor GTPase family. EF-Tu/EF-1A subfamily. In terms of assembly, monomer.

It localises to the cytoplasm. The enzyme catalyses GTP + H2O = GDP + phosphate + H(+). Its function is as follows. GTP hydrolase that promotes the GTP-dependent binding of aminoacyl-tRNA to the A-site of ribosomes during protein biosynthesis. In Rickettsia akari (strain Hartford), this protein is Elongation factor Tu.